The primary structure comprises 1060 residues: Centrosomal protein of 131 kDa (1060 aa).

The segment covering 1–11 has biased composition (polar residues); the sequence is MKGSRTITATP. Residues 1–96 are disordered; sequence MKGSRTITAT…TGSPRPAEPT (96 aa). The interval 1–244 is interaction with PLK4; it reads MKGSRTITAT…SQSARGTTGL (244 aa). Phosphoserine is present on residues S14 and S35. Polar residues-rich tracts occupy residues 32 to 50 and 73 to 88; these read RPGSASATRSIFRSMSVAT and LRRSNSTTQVNQSWTG. Position 47 is a phosphoserine; by MAPKAPK2 (S47). Position 78 is a phosphoserine; by MAPKAPK2 and PLK4 (S78). 5 positions are modified to phosphoserine: S89, S105, S114, S146, and S150. Disordered regions lie at residues 136 to 155 and 217 to 248; these read LALPASAQSPSTLDSALGPR and EGGEGSDLGKPRKNLSSASQSARGTTGLLRRR. Residues 217 to 226 show a composition bias toward basic and acidic residues; it reads EGGEGSDLGK. The IQ domain maps to 263–283; sequence NQAAVTIQRWYRCQVQRRRAG. Basic and acidic residues-rich tracts occupy residues 314–327 and 344–363; these read EEAARKKAREEKAR and KASEAEHRRPKDRPETRAPE. The interval 314–437 is disordered; sequence EEAARKKARE…VSGSSRGKAR (124 aa). Residues 398-408 are compositionally biased toward low complexity; sequence ASESSPEQWQS. Over residues 409–424 the composition is skewed to basic and acidic residues; the sequence is PEDKPQDIHSQGEARQ. A Phosphothreonine modification is found at T473. S481 carries the post-translational modification Phosphoserine.

It belongs to the CEP131 family. Self-associates. Associates with the centriolar satellite BBSome protein complex Interacts with BBS4; the interaction limits BBS4 availability for association with the BBSome complex, and hence negatively regulates ciliary localization of the BBSome complex. Interacts with MIB1. Interacts with PCM1; the interaction increases in response to ultraviolet light (UV) radiation. Associates with microtubule; association to microtubule is reduced in response to cellular stress, such as UV stimulation, in a process that requires p38 MAP kinase signaling. Interacts with CEP290, DCTN1, MAP1LC3B, PCNT, PCM1 and CEP152. Interacts with 14-3-3 proteins following UV-induced phosphorylation by MAPKAPK2; this inhibits formation of novel centriolar satellites. Interacts with SDCCAG8. Interacts with CCDC61. Interacts with PLK4. In terms of processing, ubiquitinated. Undergoes monoubiquitination catalyzed by the E3 ubiquitin-protein ligase MIB1 in proliferating cells, preventing cilia formation. Monoubiquitination by MIB1 is inhibited in response to cellular stress, such as ultraviolet light (UV) radiation or heat shock, resulting in ciliogenesis restoration. Post-translationally, MAPKAPK2-dependent phosphorylation at Ser-47 and Ser-78 occurs in response to cellular stress such as exposure to ultraviolet irradiation and promotes binding to 14-3-3 proteins which leads to cytoplasmic sequestration of CEP131 and blocks formation of new centriolar satellites. Phosphorylation at Ser-78 mediated by PLK4 is essential for proper organization and integrity of centriolar satellites but is dispensable for its localization to centrioles and its function in ciliogenesis. As to expression, localized to the pre-acrosome region of round and elongated spermatids in testis but also present in ovary, brain and adipose tissue.

It localises to the cytoplasm. Its subcellular location is the cytoskeleton. It is found in the microtubule organizing center. The protein resides in the centrosome. The protein localises to the centriolar satellite. It localises to the centriole. Its subcellular location is the cilium basal body. It is found in the cytoplasmic vesicle. The protein resides in the secretory vesicle. The protein localises to the acrosome. Component of centriolar satellites contributing to the building of a complex and dynamic network required to regulate cilia/flagellum formation. In proliferating cells, MIB1-mediated ubiquitination induces its sequestration within centriolar satellites, precluding untimely cilia formation initiation. In contrast, during normal and ultraviolet or heat shock cellular stress-induced ciliogenesis, its non-ubiquitinated form is rapidly displaced from centriolar satellites and recruited to centrosome/basal bodies in a microtubule- and p38 MAPK-dependent manner. Also acts as a negative regulator of BBSome ciliary trafficking. Plays a role in sperm flagellar formation; may be involved in the regulation of intraflagellar transport (IFT) and/or intramanchette (IMT) trafficking, which are important for axoneme extension and/or cargo delivery to the nascent sperm tail. Required for optimal cell proliferation and cell cycle progression; may play a role in the regulation of genome stability and centriole duplication in non-ciliogenic cells. Involved in centriole duplication. Required for CEP152, WDR62 and CEP63 centrosomal localization and promotes the centrosomal localization of CDK2. Essential for maintaining proper centriolar satellite integrity. This chain is Centrosomal protein of 131 kDa (Cep131), found in Mus musculus (Mouse).